We begin with the raw amino-acid sequence, 207 residues long: uncharacterized protein (207 aa).

Positions 1–19 are cleaved as a signal peptide; the sequence is MRHGLLALICWLCCVVAHS.

The protein to P.aeruginosa PA4490 and T.maritima TM0986.

This is an uncharacterized protein from Escherichia coli (strain K12).